Reading from the N-terminus, the 70-residue chain is Ribosome modulation factor (70 aa).

This sequence belongs to the ribosome modulation factor family.

The protein resides in the cytoplasm. Its function is as follows. During stationary phase, converts 70S ribosomes to an inactive dimeric form (100S ribosomes). This chain is Ribosome modulation factor, found in Marinobacter adhaerens (strain DSM 23420 / HP15).